The chain runs to 663 residues: Chaperone protein HtpG (663 aa).

Residues 1–352 (MTKQTLSFQA…SADLPLNVSR (352 aa)) form an a; substrate-binding region. The segment covering 218–228 (ELINPSDEKGG) has biased composition (basic and acidic residues). A disordered region spans residues 218–237 (ELINPSDEKGGRQPGGMVKT). The tract at residues 353–595 (ELLQESRDVK…DHGMSTQLAR (243 aa)) is b. The tract at residues 596 to 663 (MLKQAGQAAP…YVKRVNALLV (68 aa)) is c.

Belongs to the heat shock protein 90 family. Homodimer.

Its subcellular location is the cytoplasm. Molecular chaperone. Has ATPase activity. In Albidiferax ferrireducens (strain ATCC BAA-621 / DSM 15236 / T118) (Rhodoferax ferrireducens), this protein is Chaperone protein HtpG.